Consider the following 228-residue polypeptide: Probable C4-dicarboxylate response regulator DctR (228 aa).

Residues 7 to 123 form the Response regulatory domain; that stretch reads TVLLIEDDPM…RMKQALEQYR (117 aa). Asp-58 bears the 4-aspartylphosphate mark. The segment at residues 180–199 is a DNA-binding region (H-T-H motif); it reads AEEVADGVGIARVTARRYLE.

In terms of processing, phosphorylated by DctS.

It localises to the cytoplasm. Functionally, member of the two-component regulatory system DctS/DctR. Essential for expression of DctP. This Priestia megaterium (Bacillus megaterium) protein is Probable C4-dicarboxylate response regulator DctR (dctR).